The chain runs to 426 residues: Serine--tRNA ligase (426 aa).

229–231 (TAE) contributes to the L-serine binding site. 260 to 262 (RSE) contacts ATP. Glu283 contributes to the L-serine binding site. An ATP-binding site is contributed by 347-350 (EIAS). Ser383 provides a ligand contact to L-serine.

It belongs to the class-II aminoacyl-tRNA synthetase family. Type-1 seryl-tRNA synthetase subfamily. In terms of assembly, homodimer. The tRNA molecule binds across the dimer.

The protein localises to the cytoplasm. It carries out the reaction tRNA(Ser) + L-serine + ATP = L-seryl-tRNA(Ser) + AMP + diphosphate + H(+). It catalyses the reaction tRNA(Sec) + L-serine + ATP = L-seryl-tRNA(Sec) + AMP + diphosphate + H(+). The protein operates within aminoacyl-tRNA biosynthesis; selenocysteinyl-tRNA(Sec) biosynthesis; L-seryl-tRNA(Sec) from L-serine and tRNA(Sec): step 1/1. Functionally, catalyzes the attachment of serine to tRNA(Ser). Is also able to aminoacylate tRNA(Sec) with serine, to form the misacylated tRNA L-seryl-tRNA(Sec), which will be further converted into selenocysteinyl-tRNA(Sec). This chain is Serine--tRNA ligase, found in Rickettsia bellii (strain OSU 85-389).